The chain runs to 106 residues: UPF0145 protein Fphi_1781 (106 aa).

Belongs to the UPF0145 family.

This is UPF0145 protein Fphi_1781 from Francisella philomiragia subsp. philomiragia (strain ATCC 25017 / CCUG 19701 / FSC 153 / O#319-036).